The following is a 342-amino-acid chain: tRNA N6-adenosine threonylcarbamoyltransferase (342 aa).

His120 and His124 together coordinate Fe cation. Residues 142–146 (VVSGG), Asp175, Gly188, Asp192, and Asn281 contribute to the substrate site. Residue Asp310 coordinates Fe cation.

This sequence belongs to the KAE1 / TsaD family. Fe(2+) is required as a cofactor.

Its subcellular location is the cytoplasm. The catalysed reaction is L-threonylcarbamoyladenylate + adenosine(37) in tRNA = N(6)-L-threonylcarbamoyladenosine(37) in tRNA + AMP + H(+). In terms of biological role, required for the formation of a threonylcarbamoyl group on adenosine at position 37 (t(6)A37) in tRNAs that read codons beginning with adenine. Is involved in the transfer of the threonylcarbamoyl moiety of threonylcarbamoyl-AMP (TC-AMP) to the N6 group of A37, together with TsaE and TsaB. TsaD likely plays a direct catalytic role in this reaction. This chain is tRNA N6-adenosine threonylcarbamoyltransferase, found in Geobacillus kaustophilus (strain HTA426).